The primary structure comprises 91 residues: Cell division protein FtsB (91 aa).

The Cytoplasmic segment spans residues 1 to 3 (MRW). Residues 4 to 21 (PVIILAVLVVVLQYPLWL) traverse the membrane as a helical segment. Residues 22–91 (GKGGWLRVWE…EIFVQVPQKH (70 aa)) lie on the Periplasmic side of the membrane. Positions 28-72 (RVWEVDRKLHEQREENTRLEERNAGLDAEVRDLKSGNEAIEERAR) form a coiled coil.

Belongs to the FtsB family. As to quaternary structure, part of a complex composed of FtsB, FtsL and FtsQ.

It is found in the cell inner membrane. Functionally, essential cell division protein. May link together the upstream cell division proteins, which are predominantly cytoplasmic, with the downstream cell division proteins, which are predominantly periplasmic. This Azoarcus sp. (strain BH72) protein is Cell division protein FtsB.